The following is a 1440-amino-acid chain: ABC transporter G family member 46 (1440 aa).

The segment at 1-42 is disordered; that stretch reads MDDDVDAGEIYAVDRQREEGSASAAAFSRSPSTGRVDDDDDD. Low complexity predominate over residues 21–32; it reads SASAAAFSRSPS. Residues 137 to 419 form the ABC transporter 1 domain; it reads ANTLHMTTRS…FKSLGFKCLE (283 aa). Residue 170 to 177 participates in ATP binding; that stretch reads GSPGSGKT. In terms of domain architecture, ABC transmembrane type-2 1 spans 497–710; that stretch reads KILKANIDRE…ALNALAVNEF (214 aa). The next 7 membrane-spanning stretches (helical) occupy residues 516–536, 561–581, 603–623, 634–654, 659–679, 688–708, and 745–765; these read LYIF…SVFI, AIMF…PVFF, TPIS…VIGF, FLVL…IAAL, VVAS…SGFI, WLIW…LAVN, and IGLG…TICL. The disordered stretch occupies residues 794–829; it reads DQEPSSGGRVTNDKRYTEGGNNDEATSSNANHNSSP. Over residues 812–829 the composition is skewed to polar residues; sequence GGNNDEATSSNANHNSSP. One can recognise an ABC transporter 2 domain in the interval 843–1095; sequence MTFEDIRYSI…ELIKYFESIE (253 aa). 888 to 895 contributes to the ATP binding site; the sequence is GISGAGKT. Positions 1168 to 1382 constitute an ABC transmembrane type-2 2 domain; that stretch reads IQCLACLWKQ…TINGLVTSQF (215 aa). A run of 7 helical transmembrane segments spans residues 1188–1208, 1219–1236, 1271–1291, 1302–1322, 1332–1352, 1357–1377, and 1410–1430; these read IAVN…MFWG, LLSA…LGVQ, VVVE…IVYS, FFWY…YGMM, MSSI…GFLI, IPIW…INGL, and LWVA…LFGF.

It belongs to the ABC transporter superfamily. ABCG family. PDR (TC 3.A.1.205) subfamily.

It is found in the membrane. Its function is as follows. May be a general defense protein. The polypeptide is ABC transporter G family member 46 (Oryza sativa subsp. japonica (Rice)).